We begin with the raw amino-acid sequence, 338 residues long: Holliday junction branch migration complex subunit RuvB (338 aa).

Positions 1–180 (MERLLDNKFS…FGIIERLDYY (180 aa)) are large ATPase domain (RuvB-L). 9 residues coordinate ATP: Leu19, Arg20, Gly61, Lys64, Thr65, Thr66, Arg170, Tyr180, and Arg217. Thr65 serves as a coordination point for Mg(2+). Residues 181–251 (TVEELSQIVM…VAKSGLEMFE (71 aa)) are small ATPAse domain (RuvB-S). The head domain (RuvB-H) stretch occupies residues 254 to 338 (EYGLDLVDRN…FKLKESGDNR (85 aa)). The DNA site is built by Lys309 and Arg314.

It belongs to the RuvB family. As to quaternary structure, homohexamer. Forms an RuvA(8)-RuvB(12)-Holliday junction (HJ) complex. HJ DNA is sandwiched between 2 RuvA tetramers; dsDNA enters through RuvA and exits via RuvB. An RuvB hexamer assembles on each DNA strand where it exits the tetramer. Each RuvB hexamer is contacted by two RuvA subunits (via domain III) on 2 adjacent RuvB subunits; this complex drives branch migration. In the full resolvosome a probable DNA-RuvA(4)-RuvB(12)-RuvC(2) complex forms which resolves the HJ.

The protein localises to the cytoplasm. The enzyme catalyses ATP + H2O = ADP + phosphate + H(+). Its function is as follows. The RuvA-RuvB-RuvC complex processes Holliday junction (HJ) DNA during genetic recombination and DNA repair, while the RuvA-RuvB complex plays an important role in the rescue of blocked DNA replication forks via replication fork reversal (RFR). RuvA specifically binds to HJ cruciform DNA, conferring on it an open structure. The RuvB hexamer acts as an ATP-dependent pump, pulling dsDNA into and through the RuvAB complex. RuvB forms 2 homohexamers on either side of HJ DNA bound by 1 or 2 RuvA tetramers; 4 subunits per hexamer contact DNA at a time. Coordinated motions by a converter formed by DNA-disengaged RuvB subunits stimulates ATP hydrolysis and nucleotide exchange. Immobilization of the converter enables RuvB to convert the ATP-contained energy into a lever motion, pulling 2 nucleotides of DNA out of the RuvA tetramer per ATP hydrolyzed, thus driving DNA branch migration. The RuvB motors rotate together with the DNA substrate, which together with the progressing nucleotide cycle form the mechanistic basis for DNA recombination by continuous HJ branch migration. Branch migration allows RuvC to scan DNA until it finds its consensus sequence, where it cleaves and resolves cruciform DNA. The sequence is that of Holliday junction branch migration complex subunit RuvB from Caldicellulosiruptor bescii (strain ATCC BAA-1888 / DSM 6725 / KCTC 15123 / Z-1320) (Anaerocellum thermophilum).